A 476-amino-acid chain; its full sequence is Nyctalopin (476 aa).

An N-terminal signal peptide occupies residues 1–18 (MLILLLHAVVFSLPYTRA). Positions 19-57 (TEACLRACPAACTCSHVERGCSVRCDRAGLQRVPQEFPC) constitute an LRRNT domain. LRR repeat units follow at residues 58–79 (EAAS…AFGT), 82–103 (SLRR…AFKG), 106–128 (RLAE…TFAA), 131–154 (RLRR…AELP), 155–177 (ALRE…RGLA), 178–199 (NLTH…SLLG), 202–223 (RLRS…AFGD), 226–247 (ALED…AFRG), 250–271 (RLRT…WFSD), 274–295 (ELEL…AFQN), and 298–319 (GLLA…AFQP). N92 carries an N-linked (GlcNAc...) asparagine glycan. An N-linked (GlcNAc...) asparagine glycan is attached at N178. N-linked (GlcNAc...) asparagine glycosylation occurs at N295. Positions 331–383 (NPWRCDCQLEWLRDWMEGSGRVADVACASPGSVAGQDLSQVVFERSSDGLCVD) constitute an LRRCT domain. Residues N388, N427, N434, and N438 are each glycosylated (N-linked (GlcNAc...) asparagine).

Belongs to the small leucine-rich proteoglycan (SLRP) family. SLRP class IV subfamily. Expressed abundantly in retina with lower levels in brain, lung, spleen and testis. Not detected in kidney, heart or liver. In the retina, highest expression found in the inner nuclear layer and ganglion cell layer.

It localises to the secreted. The protein resides in the extracellular space. The protein localises to the extracellular matrix. The chain is Nyctalopin (Nyx) from Mus musculus (Mouse).